A 338-amino-acid polypeptide reads, in one-letter code: Ketol-acid reductoisomerase (NADP(+)) (338 aa).

Residues 1 to 181 (MKVYYDKDAD…GGTKGGVIET (181 aa)) form the KARI N-terminal Rossmann domain. NADP(+) contacts are provided by residues 24–27 (YGSQ), R47, S52, and 82–85 (DESQ). H107 is an active-site residue. G133 contacts NADP(+). The KARI C-terminal knotted domain maps to 182–327 (NFREETETDL…AELRAMMPWI (146 aa)). Residues D190, E194, E226, and E230 each contribute to the Mg(2+) site. S251 serves as a coordination point for substrate.

Belongs to the ketol-acid reductoisomerase family. The cofactor is Mg(2+).

The enzyme catalyses (2R)-2,3-dihydroxy-3-methylbutanoate + NADP(+) = (2S)-2-acetolactate + NADPH + H(+). The catalysed reaction is (2R,3R)-2,3-dihydroxy-3-methylpentanoate + NADP(+) = (S)-2-ethyl-2-hydroxy-3-oxobutanoate + NADPH + H(+). The protein operates within amino-acid biosynthesis; L-isoleucine biosynthesis; L-isoleucine from 2-oxobutanoate: step 2/4. Its pathway is amino-acid biosynthesis; L-valine biosynthesis; L-valine from pyruvate: step 2/4. Its function is as follows. Involved in the biosynthesis of branched-chain amino acids (BCAA). Catalyzes an alkyl-migration followed by a ketol-acid reduction of (S)-2-acetolactate (S2AL) to yield (R)-2,3-dihydroxy-isovalerate. In the isomerase reaction, S2AL is rearranged via a Mg-dependent methyl migration to produce 3-hydroxy-3-methyl-2-ketobutyrate (HMKB). In the reductase reaction, this 2-ketoacid undergoes a metal-dependent reduction by NADPH to yield (R)-2,3-dihydroxy-isovalerate. This Chromobacterium violaceum (strain ATCC 12472 / DSM 30191 / JCM 1249 / CCUG 213 / NBRC 12614 / NCIMB 9131 / NCTC 9757 / MK) protein is Ketol-acid reductoisomerase (NADP(+)).